The chain runs to 261 residues: MDIVSRQKVRRFEAGTFQEIESSVATEYPLTIYVNDQELVTIVCTPEHLEDLVVGFLTSEGIVRGPGDIDSVDIIEATGHAKVSANFVNKFNAKYRGKRYITSCCGKSRENFYFQSDASLVNVKQNSNLKLTTDRIFRLMEKFEQNSATFHQTGGVHNAALCSSAEIIYSRMDIGRHNALDKIYGRALKDGTATDDKAIIFSGRISSEILVKTAKLGCGIILSRSAPTELAINMAEELNITTVGFIRGDRLNVYSGFERIT.

Catalysis depends on Cys105, which acts as the Cysteine persulfide intermediate. Phe245–Arg250 lines the Mo-bis(molybdopterin guanine dinucleotide) pocket.

The protein belongs to the FdhD family.

The protein resides in the cytoplasm. Required for formate dehydrogenase (FDH) activity. Acts as a sulfur carrier protein that transfers sulfur from IscS to the molybdenum cofactor prior to its insertion into FDH. This chain is Sulfur carrier protein FdhD, found in Listeria innocua serovar 6a (strain ATCC BAA-680 / CLIP 11262).